Here is a 325-residue protein sequence, read N- to C-terminus: Ribosomal RNA small subunit methyltransferase H (325 aa).

S-adenosyl-L-methionine contacts are provided by residues 39–41, aspartate 59, phenylalanine 90, aspartate 108, and glutamine 115; that span reads GGH.

The protein belongs to the methyltransferase superfamily. RsmH family.

Its subcellular location is the cytoplasm. It catalyses the reaction cytidine(1402) in 16S rRNA + S-adenosyl-L-methionine = N(4)-methylcytidine(1402) in 16S rRNA + S-adenosyl-L-homocysteine + H(+). Specifically methylates the N4 position of cytidine in position 1402 (C1402) of 16S rRNA. The chain is Ribosomal RNA small subunit methyltransferase H from Leptothrix cholodnii (strain ATCC 51168 / LMG 8142 / SP-6) (Leptothrix discophora (strain SP-6)).